The primary structure comprises 482 residues: ATP synthase subunit beta (482 aa).

Position 162–169 (162–169 (GGAGVGKT)) interacts with ATP.

It belongs to the ATPase alpha/beta chains family. F-type ATPases have 2 components, CF(1) - the catalytic core - and CF(0) - the membrane proton channel. CF(1) has five subunits: alpha(3), beta(3), gamma(1), delta(1), epsilon(1). CF(0) has four main subunits: a(1), b(1), b'(1) and c(9-12).

Its subcellular location is the cellular thylakoid membrane. It carries out the reaction ATP + H2O + 4 H(+)(in) = ADP + phosphate + 5 H(+)(out). Its function is as follows. Produces ATP from ADP in the presence of a proton gradient across the membrane. The catalytic sites are hosted primarily by the beta subunits. In Synechococcus sp. (strain PCC 6716), this protein is ATP synthase subunit beta.